Consider the following 129-residue polypeptide: NADH-quinone oxidoreductase subunit A (129 aa).

The next 3 helical transmembrane spans lie at Leu14–Leu34, Phe67–Ala87, and Trp95–Leu115.

It belongs to the complex I subunit 3 family. NDH-1 is composed of 14 different subunits. Subunits NuoA, H, J, K, L, M, N constitute the membrane sector of the complex.

It localises to the cell inner membrane. It carries out the reaction a quinone + NADH + 5 H(+)(in) = a quinol + NAD(+) + 4 H(+)(out). In terms of biological role, NDH-1 shuttles electrons from NADH, via FMN and iron-sulfur (Fe-S) centers, to quinones in the respiratory chain. The immediate electron acceptor for the enzyme in this species is believed to be ubiquinone. Couples the redox reaction to proton translocation (for every two electrons transferred, four hydrogen ions are translocated across the cytoplasmic membrane), and thus conserves the redox energy in a proton gradient. The sequence is that of NADH-quinone oxidoreductase subunit A from Rhodopseudomonas palustris (strain HaA2).